We begin with the raw amino-acid sequence, 420 residues long: UDP-N-acetyl-D-mannosamine dehydrogenase (420 aa).

Y13, I14, D33, T85, and T126 together coordinate NAD(+). Residues R160, V161, K212, N216, R219, H250, R252, and G263 each contribute to the UDP-N-acetyl-alpha-D-mannosaminouronate site. The Proton donor/acceptor role is filled by K212. Residue C266 is the Nucleophile of the active site. Positions 330 and 331 each coordinate UDP-N-acetyl-alpha-D-mannosaminouronate. Residue R338 participates in NAD(+) binding. Residue K416 participates in UDP-N-acetyl-alpha-D-mannosaminouronate binding.

Belongs to the UDP-glucose/GDP-mannose dehydrogenase family. WecC subfamily. As to quaternary structure, homodimer.

It catalyses the reaction UDP-N-acetyl-alpha-D-mannosamine + 2 NAD(+) + H2O = UDP-N-acetyl-alpha-D-mannosaminouronate + 2 NADH + 3 H(+). It functions in the pathway bacterial outer membrane biogenesis; enterobacterial common antigen biosynthesis. Functionally, catalyzes the four-electron oxidation of UDP-N-acetyl-D-mannosamine (UDP-ManNAc), reducing NAD(+) and releasing UDP-N-acetylmannosaminuronic acid (UDP-ManNAcA). This Yersinia pestis protein is UDP-N-acetyl-D-mannosamine dehydrogenase.